The primary structure comprises 248 residues: (2S)-[(R)-hydroxy(phenyl)methyl]succinyl-CoA dehydrogenase subunit BbsD (248 aa).

Residues Ser15, Asp36, Asp62, Ile63, Asn89, Tyr153, and Lys157 each contribute to the NAD(+) site. The Proton acceptor role is filled by Tyr153.

It belongs to the short-chain dehydrogenases/reductases (SDR) family. Heterotetramer composed of 2 inactive BbsC subunits and 2 active BbsD subunits.

The enzyme catalyses (2S)-[(R)-hydroxy(phenyl)methyl]succinyl-CoA + NAD(+) = (S)-2-benzoylsuccinyl-CoA + NADH + H(+). It participates in xenobiotic degradation; toluene degradation. With respect to regulation, activity is probably regulated by the inactive BbsC subunit. Involved in an anaerobic toluene degradation pathway. Active subunit that catalyzes the oxidation of 2-(alpha-hydroxybenzyl)succinyl-CoA to 2-benzoylsuccinyl-CoA. In vitro, can catalyze the NADH-dependent reduction of the artificial substrates 2,2-dichloroacetophene and 2,4'-dichloroacetophenone. This Thauera aromatica protein is (2S)-[(R)-hydroxy(phenyl)methyl]succinyl-CoA dehydrogenase subunit BbsD.